An 828-amino-acid chain; its full sequence is Periplasmic nitrate reductase (828 aa).

Residues 1-31 (MKLSRRHFMKANAVAAAAAVAGITIPIAVRA) constitute a signal peptide (tat-type signal). The 57-residue stretch at 39 to 95 (IHWDKAPCRFCGVGCGVLVGTQNGRIVASQGDPDAPVNRGLNCIKGYFLPKIMYGQD) folds into the 4Fe-4S Mo/W bis-MGD-type domain. The [4Fe-4S] cluster site is built by Cys-46, Cys-49, Cys-53, and Cys-81. Residues Lys-83, Gln-150, Asn-175, Cys-179, 212 to 219 (WGSNMAEM), 243 to 247 (STYQH), 262 to 264 (QTD), Met-372, Gln-376, Asn-482, 508 to 509 (SD), Lys-531, Asp-558, and 718 to 727 (TGRVLEHWHT) contribute to the Mo-bis(molybdopterin guanine dinucleotide) site. Phe-794 contacts substrate. Residues Asn-802 and Lys-819 each contribute to the Mo-bis(molybdopterin guanine dinucleotide) site.

This sequence belongs to the prokaryotic molybdopterin-containing oxidoreductase family. NasA/NapA/NarB subfamily. In terms of assembly, component of the periplasmic nitrate reductase NapAB complex composed of NapA and NapB. [4Fe-4S] cluster serves as cofactor. The cofactor is Mo-bis(molybdopterin guanine dinucleotide). In terms of processing, predicted to be exported by the Tat system. The position of the signal peptide cleavage has not been experimentally proven.

It localises to the periplasm. The enzyme catalyses 2 Fe(II)-[cytochrome] + nitrate + 2 H(+) = 2 Fe(III)-[cytochrome] + nitrite + H2O. Catalytic subunit of the periplasmic nitrate reductase complex NapAB. Receives electrons from NapB and catalyzes the reduction of nitrate to nitrite. The chain is Periplasmic nitrate reductase from Pectobacterium carotovorum subsp. carotovorum (strain PC1).